Consider the following 147-residue polypeptide: CRISP-1 (147 aa).

This sequence belongs to the CRISP family. Expressed by the venom gland.

The protein resides in the secreted. In Phoneutria keyserlingi (Brazilian wandering spider), this protein is CRISP-1.